Consider the following 123-residue polypeptide: Large ribosomal subunit protein bL12 (123 aa).

An N6-methyllysine modification is found at lysine 84. Positions proline 94–lysine 123 are disordered. Positions glycine 100–glutamate 115 are enriched in basic and acidic residues.

It belongs to the bacterial ribosomal protein bL12 family. In terms of assembly, homodimer. Part of the ribosomal stalk of the 50S ribosomal subunit. Forms a multimeric L10(L12)X complex, where L10 forms an elongated spine to which 2 to 4 L12 dimers bind in a sequential fashion. Binds GTP-bound translation factors.

Functionally, seems to be the binding site for several of the factors involved in protein synthesis and appears to be essential for accurate translation. Forms part of the ribosomal stalk which helps the ribosome interact with GTP-bound translation factors. Is thus essential for accurate translation. This chain is Large ribosomal subunit protein bL12, found in Halophilic eubacterium NRCC 41227.